The sequence spans 121 residues: Large ribosomal subunit protein bL12 (121 aa).

Belongs to the bacterial ribosomal protein bL12 family. Homodimer. Part of the ribosomal stalk of the 50S ribosomal subunit. Forms a multimeric L10(L12)X complex, where L10 forms an elongated spine to which 2 to 4 L12 dimers bind in a sequential fashion. Binds GTP-bound translation factors.

In terms of biological role, forms part of the ribosomal stalk which helps the ribosome interact with GTP-bound translation factors. Is thus essential for accurate translation. In Lactococcus lactis subsp. cremoris (strain MG1363), this protein is Large ribosomal subunit protein bL12.